The following is a 563-amino-acid chain: Arginine--tRNA ligase (563 aa).

The 'HIGH' region motif lies at 120 to 130 (PNIAKPFHIGH).

This sequence belongs to the class-I aminoacyl-tRNA synthetase family. In terms of assembly, monomer.

The protein resides in the cytoplasm. The enzyme catalyses tRNA(Arg) + L-arginine + ATP = L-arginyl-tRNA(Arg) + AMP + diphosphate. The protein is Arginine--tRNA ligase of Clostridium botulinum (strain ATCC 19397 / Type A).